Reading from the N-terminus, the 344-residue chain is Lipase chaperone (344 aa).

Residues 13 to 35 form a helical membrane-spanning segment; the sequence is RIAPYGAAGLAAIVGVAIWSGTG.

The protein belongs to the lipase chaperone family.

Its subcellular location is the cell inner membrane. Its function is as follows. May be involved in the folding of the extracellular lipase during its passage through the periplasm. This is Lipase chaperone from Burkholderia vietnamiensis (strain G4 / LMG 22486) (Burkholderia cepacia (strain R1808)).